Reading from the N-terminus, the 399-residue chain is Argininosuccinate synthase (399 aa).

ATP contacts are provided by residues 10-18 and Ala38; that span reads AYSGGVDTS. L-citrulline is bound at residue Tyr89. Gly119 serves as a coordination point for ATP. Positions 121, 125, and 126 each coordinate L-aspartate. Residue Asn125 participates in L-citrulline binding. Positions 129, 177, 186, 262, and 274 each coordinate L-citrulline.

It belongs to the argininosuccinate synthase family. Type 1 subfamily. In terms of assembly, homotetramer.

The protein localises to the cytoplasm. It catalyses the reaction L-citrulline + L-aspartate + ATP = 2-(N(omega)-L-arginino)succinate + AMP + diphosphate + H(+). It participates in amino-acid biosynthesis; L-arginine biosynthesis; L-arginine from L-ornithine and carbamoyl phosphate: step 2/3. The protein is Argininosuccinate synthase of Rippkaea orientalis (strain PCC 8801 / RF-1) (Cyanothece sp. (strain PCC 8801)).